A 180-amino-acid polypeptide reads, in one-letter code: Adenine phosphoribosyltransferase (180 aa).

At Ser2 the chain carries N-acetylserine. A phosphoserine mark is found at Ser15 and Ser30. The residue at position 60 (Tyr60) is a Phosphotyrosine. Residue Ser66 is modified to Phosphoserine. At Lys114 the chain carries N6-acetyllysine. Residue Thr135 is modified to Phosphothreonine.

It belongs to the purine/pyrimidine phosphoribosyltransferase family. As to quaternary structure, homodimer.

It localises to the cytoplasm. It catalyses the reaction AMP + diphosphate = 5-phospho-alpha-D-ribose 1-diphosphate + adenine. It participates in purine metabolism; AMP biosynthesis via salvage pathway; AMP from adenine: step 1/1. Its function is as follows. Catalyzes a salvage reaction resulting in the formation of AMP, that is energically less costly than de novo synthesis. The chain is Adenine phosphoribosyltransferase from Mastomys natalensis (African soft-furred rat).